Reading from the N-terminus, the 156-residue chain is Cyclic pyranopterin monophosphate synthase (156 aa).

Substrate-binding positions include 75-77 (LCH) and 111-112 (ME). Residue Asp-126 is part of the active site.

Belongs to the MoaC family. Homohexamer; trimer of dimers.

The enzyme catalyses (8S)-3',8-cyclo-7,8-dihydroguanosine 5'-triphosphate = cyclic pyranopterin phosphate + diphosphate. The protein operates within cofactor biosynthesis; molybdopterin biosynthesis. In terms of biological role, catalyzes the conversion of (8S)-3',8-cyclo-7,8-dihydroguanosine 5'-triphosphate to cyclic pyranopterin monophosphate (cPMP). This Corynebacterium glutamicum (strain ATCC 13032 / DSM 20300 / JCM 1318 / BCRC 11384 / CCUG 27702 / LMG 3730 / NBRC 12168 / NCIMB 10025 / NRRL B-2784 / 534) protein is Cyclic pyranopterin monophosphate synthase.